The primary structure comprises 312 residues: Olfactory receptor 2M5 (312 aa).

Over 1–25 (MAWENQTFNSDFILLGIFNHSPTHT) the chain is Extracellular. Asn5 carries N-linked (GlcNAc...) asparagine glycosylation. Residues 26-49 (FLFFLVLAIFSVAFMGNSVMVLLI) form a helical membrane-spanning segment. Residues 50–57 (YLDTQLHT) are Cytoplasmic-facing. A helical membrane pass occupies residues 58–79 (PMYFLLSQLFLMDLMLICSTVP). At 80 to 100 (KMAFNYLSGSKSISMAGCATQ) the chain is on the extracellular side. Cys97 and Cys189 form a disulfide bridge. A helical membrane pass occupies residues 101-120 (IFFYVSLLGSECFLLAVMSY). Residues 121–139 (DRYIAICHPLRYTNLMRPK) lie on the Cytoplasmic side of the membrane. The chain crosses the membrane as a helical span at residues 140 to 158 (ICGLMTAFSWILGSMDAII). The Extracellular portion of the chain corresponds to 159 to 195 (DAVATFSFSYCGSREIAHFFCDFPSLLILSCNDTSIF). A helical transmembrane segment spans residues 196–219 (EKVLFICCIVMIVFPVAIIIASYA). At 220–236 (RVILAVIHMGSGEGRRK) the chain is on the cytoplasmic side. The helical transmembrane segment at 237–259 (AFTTCSSHLMVVGMYYGAGLFMY) threads the bilayer. The Extracellular portion of the chain corresponds to 260–272 (IRPTSDRSPMQDK). The chain crosses the membrane as a helical span at residues 273 to 292 (LVSVFYTILTPMLNPLIYSL). At 293-311 (RNKEVTRALRKVLGKGKCG) the chain is on the cytoplasmic side.

The protein belongs to the G-protein coupled receptor 1 family.

The protein resides in the cell membrane. Odorant receptor. This Homo sapiens (Human) protein is Olfactory receptor 2M5 (OR2M5).